The sequence spans 140 residues: Large-conductance mechanosensitive channel (140 aa).

Transmembrane regions (helical) follow at residues 16 to 36 (VIDLAVGVVIGAAFGKIVTAL) and 84 to 104 (INTVVQFVIIAFAIFLLVKLI).

Belongs to the MscL family. In terms of assembly, homopentamer.

The protein resides in the cell inner membrane. Functionally, channel that opens in response to stretch forces in the membrane lipid bilayer. May participate in the regulation of osmotic pressure changes within the cell. The protein is Large-conductance mechanosensitive channel of Xanthomonas oryzae pv. oryzae (strain MAFF 311018).